Consider the following 489-residue polypeptide: GDP-fucose protein O-fucosyltransferase 4 (489 aa).

Topologically, residues 1–7 are cytoplasmic; the sequence is MAARCTE. Residues 8-24 traverse the membrane as a helical; Signal-anchor for type II membrane protein segment; it reads AVLAALGVLSVCSASSS. Residues 25–489 lie on the Lumenal side of the membrane; sequence GSEASGEAER…EIFMKRNKNL (465 aa). Residue Asn-162 is glycosylated (N-linked (GlcNAc...) asparagine). Cys-385 and Cys-388 are disulfide-bonded.

Belongs to the glycosyltransferase 10 family. As to expression, widely expressed. Expressed at slightly higher level in heart, kidney and lung.

The protein localises to the endoplasmic reticulum membrane. The catalysed reaction is L-threonyl-[protein] + GDP-beta-L-fucose = 3-O-(alpha-L-fucosyl)-L-threonyl-[protein] + GDP + H(+). The enzyme catalyses L-seryl-[protein] + GDP-beta-L-fucose = 3-O-(alpha-L-fucosyl)-L-seryl-[protein] + GDP + H(+). It functions in the pathway protein modification; protein glycosylation. Protein O-fucosyltransferase that specifically catalyzes O-fucosylation of serine or threonine residues in EMI domains of target proteins, such as MMRN1, MMRN2 and EMID1. Attaches fucose through an O-glycosidic linkage. O-fucosylation of EMI domain-containing proteins may be required for facilitating protein folding and secretion. Also shows minor alpha-(1,3)-fucosyltransferase activity toward activity toward biantennary N-glycan acceptors. However, this was tested with a library of synthetic substrates and this activity is unsure in vivo. The polypeptide is GDP-fucose protein O-fucosyltransferase 4 (Fut11) (Mus musculus (Mouse)).